The chain runs to 234 residues: uncharacterized protein (234 aa).

6 helical membrane passes run 5–23 (LFYI…LWSF), 38–60 (IPTA…GFWV), 73–92 (AHIQ…AHGW), 127–149 (AITL…YIWL), 170–192 (GVAI…TVIS), and 197–217 (TQAG…ALAF).

The protein resides in the cell membrane. This is an uncharacterized protein from Archaeoglobus fulgidus (strain ATCC 49558 / DSM 4304 / JCM 9628 / NBRC 100126 / VC-16).